We begin with the raw amino-acid sequence, 156 residues long: Arginine repressor (156 aa).

This sequence belongs to the ArgR family.

The protein resides in the cytoplasm. It functions in the pathway amino-acid biosynthesis; L-arginine biosynthesis [regulation]. Functionally, regulates arginine biosynthesis genes. This chain is Arginine repressor, found in Shewanella piezotolerans (strain WP3 / JCM 13877).